Consider the following 91-residue polypeptide: Transcription factor ILI7 (91 aa).

Positions 4-58 (RSRSRASSAARITDEQIGDLVSKLQALLPEARLRSNDRVPSARVLQETCSYIRSL) constitute a bHLH domain.

This sequence belongs to the bHLH protein family.

Its function is as follows. Atypical and probable non DNA-binding bHLH transcription factor that integrates multiple signaling pathways to regulate cell elongation and plant development. The protein is Transcription factor ILI7 (ILI7) of Oryza sativa subsp. indica (Rice).